The sequence spans 314 residues: Ribose-phosphate pyrophosphokinase (314 aa).

ATP is bound by residues 37 to 39 and 96 to 97; these read DGE and RQ. Positions 131 and 170 each coordinate Mg(2+). K194 is a catalytic residue. D-ribose 5-phosphate is bound by residues R196, D220, and 224-228; that span reads DTGGT.

This sequence belongs to the ribose-phosphate pyrophosphokinase family. Class I subfamily. In terms of assembly, homohexamer. Requires Mg(2+) as cofactor.

The protein resides in the cytoplasm. It catalyses the reaction D-ribose 5-phosphate + ATP = 5-phospho-alpha-D-ribose 1-diphosphate + AMP + H(+). Its pathway is metabolic intermediate biosynthesis; 5-phospho-alpha-D-ribose 1-diphosphate biosynthesis; 5-phospho-alpha-D-ribose 1-diphosphate from D-ribose 5-phosphate (route I): step 1/1. In terms of biological role, involved in the biosynthesis of the central metabolite phospho-alpha-D-ribosyl-1-pyrophosphate (PRPP) via the transfer of pyrophosphoryl group from ATP to 1-hydroxyl of ribose-5-phosphate (Rib-5-P). The sequence is that of Ribose-phosphate pyrophosphokinase from Vibrio cholerae serotype O1 (strain ATCC 39315 / El Tor Inaba N16961).